A 319-amino-acid polypeptide reads, in one-letter code: Structure-specific endonuclease subunit SLX1 (319 aa).

Positions 20–103 constitute a GIY-YIG domain; that stretch reads TFYCCYLLQS…QHGYKTHYIP (84 aa). The segment at 233 to 297 adopts an SLX1-type zinc-finger fold; it reads CNLCGQCYDY…LPNFCMCPGC (65 aa).

It belongs to the SLX1 family. Forms a heterodimer with SLX4. The cofactor is a divalent metal cation.

Its subcellular location is the nucleus. Functionally, catalytic subunit of the SLX1-SLX4 structure-specific endonuclease that resolves DNA secondary structures generated during DNA repair and recombination. Has endonuclease activity towards branched DNA substrates, introducing single-strand cuts in duplex DNA close to junctions with ss-DNA. The protein is Structure-specific endonuclease subunit SLX1 of Vanderwaltozyma polyspora (strain ATCC 22028 / DSM 70294 / BCRC 21397 / CBS 2163 / NBRC 10782 / NRRL Y-8283 / UCD 57-17) (Kluyveromyces polysporus).